We begin with the raw amino-acid sequence, 131 residues long: Photosystem II extrinsic protein U (131 aa).

Positions 1–28 (MKFISRLLVACSLLIGLMGFLGADLAQA) are cleaved as a signal peptide. A propeptide spanning residues 29–36 (LTPNPILA) is cleaved from the precursor.

Belongs to the PsbU family. In terms of assembly, PSII is composed of 1 copy each of membrane proteins PsbA, PsbB, PsbC, PsbD, PsbE, PsbF, PsbH, PsbI, PsbJ, PsbK, PsbL, PsbM, PsbT, PsbX, PsbY, PsbZ, Psb30/Ycf12, peripheral proteins PsbO, CyanoQ (PsbQ), PsbU, PsbV and a large number of cofactors. It forms dimeric complexes.

The protein resides in the cellular thylakoid membrane. Its function is as follows. One of the extrinsic, lumenal subunits of photosystem II (PSII). PSII is a light-driven water plastoquinone oxidoreductase, using light energy to abstract electrons from H(2)O, generating a proton gradient subsequently used for ATP formation. The extrinsic proteins stabilize the structure of photosystem II oxygen-evolving complex (OEC), the ion environment of oxygen evolution and protect the OEC against heat-induced inactivation. May modulate the Cl(-) requirement for oxygen evolution. In Synechocystis sp. (strain ATCC 27184 / PCC 6803 / Kazusa), this protein is Photosystem II extrinsic protein U.